The sequence spans 123 residues: Small ribosomal subunit protein uS12 (123 aa).

The interval 9–32 (ANPREVQKSRKKVPALQQSPQKRG) is disordered. A 3-methylthioaspartic acid modification is found at Asp-89.

This sequence belongs to the universal ribosomal protein uS12 family. Part of the 30S ribosomal subunit. Contacts proteins S8 and S17. May interact with IF1 in the 30S initiation complex.

With S4 and S5 plays an important role in translational accuracy. Functionally, interacts with and stabilizes bases of the 16S rRNA that are involved in tRNA selection in the A site and with the mRNA backbone. Located at the interface of the 30S and 50S subunits, it traverses the body of the 30S subunit contacting proteins on the other side and probably holding the rRNA structure together. The combined cluster of proteins S8, S12 and S17 appears to hold together the shoulder and platform of the 30S subunit. This Bradyrhizobium sp. (strain BTAi1 / ATCC BAA-1182) protein is Small ribosomal subunit protein uS12.